Consider the following 164-residue polypeptide: Serine/arginine-rich splicing factor 3 (164 aa).

Methionine 1 carries the post-translational modification N-acetylmethionine. The segment at 1-90 (MHRDSCPLDC…SNGEKRSRNR (90 aa)) is sufficient for interaction with NXF1 and SRSP. At serine 5 the chain carries Phosphoserine. The RRM domain occupies 10 to 83 (CKVYVGNLGN…CRVRVELSNG (74 aa)). Lysine 23 is subject to N6-acetyllysine. The segment at 81 to 164 (SNGEKRSRNR…RSRSRSNERK (84 aa)) is disordered. Residues 107-128 (RSPPPRRRSPRRRSFSRSRSRS) show a composition bias toward basic residues. Residues 119–133 (RSFSRSRSRSLSRDR) form a B-1 repeat. Residues 119 to 164 (RSFSRSRSRSLSRDRRRERSLSRERNHKPSRSFSRSRSRSRSNERK) are 2 X approximate repeats, basic. A compositionally biased stretch (basic and acidic residues) spans 129 to 142 (LSRDRRRERSLSRE). Positions 143-158 (RNHKPSRSFSRSRSRS) are enriched in basic residues. The stretch at 149–164 (RSFSRSRSRSRSNERK) is one B-2 repeat.

Belongs to the splicing factor SR family. As to quaternary structure, interacts with CPSF6. Interacts with RBMY1A1. Interacts with SREK1/SFRS12. Interacts with NXF1. Interacts with YTHDC1, leading to recruitment to RNA elements adjacent to m6A sites. Interacts with SRSP; increases SRSF3 binding to specific exons. Post-translationally, phosphorylated by CLK1, CLK2, CLK3 and CLK4. Extensively phosphorylated on serine residues in the RS domain.

It localises to the nucleus. Its subcellular location is the nucleus speckle. It is found in the cytoplasm. In terms of biological role, splicing factor, which binds the consensus motif 5'-C[ACU][AU]C[ACU][AC]C-3' within pre-mRNA and promotes specific exons inclusion during alternative splicing. Interaction with YTHDC1, a RNA-binding protein that recognizes and binds N6-methyladenosine (m6A)-containing RNAs, promotes recruitment of SRSF3 to its mRNA-binding elements adjacent to m6A sites within exons. Also functions as an adapter involved in mRNA nuclear export. Binds mRNA which is thought to be transferred to the NXF1-NXT1 heterodimer for export (TAP/NXF1 pathway); enhances NXF1-NXT1 RNA-binding activity. Involved in nuclear export of m6A-containing mRNAs via interaction with YTHDC1: interaction with YTHDC1 facilitates m6A-containing mRNA-binding to both SRSF3 and NXF1, promoting mRNA nuclear export. This chain is Serine/arginine-rich splicing factor 3 (SRSF3), found in Bos taurus (Bovine).